Reading from the N-terminus, the 536-residue chain is MFS-type efflux pump MFS1 (536 aa).

Transmembrane regions (helical) follow at residues 30–50 (VTGL…LLVA), 80–100 (YLLT…FFPV), and 102–122 (WVFL…GAAP). Asparagine 123 carries N-linked (GlcNAc...) asparagine glycosylation. A run of 3 helical transmembrane segments spans residues 133–153 (VAGI…AYSI), 163–183 (GAIG…GGAF), and 191–211 (WCFY…LIFL). The N-linked (GlcNAc...) asparagine glycan is linked to asparagine 221. The next 8 membrane-spanning stretches (helical) occupy residues 234 to 254 (IGTA…QWGG), 264 to 284 (IIAL…FQIR), 306 to 326 (FFLF…PIWF), 342 to 362 (IPMV…VTAI), 366 to 386 (APLY…LTTF), 400 to 420 (IIFG…AQAV), 426 to 446 (VAVG…LFVS), and 503 to 523 (TWYV…GMEW).

This sequence belongs to the major facilitator superfamily. TCR/Tet family.

It localises to the cell membrane. Its function is as follows. MFS-type efflux pump involved in the modulation susceptibility to azoles, including fluconazole, itraconazole, ketoconazole, miconazole and voriconazole. Confers also increased resistance chloramphenicol and thiamphenicol, suggesting that it acts as a pleiotropic drug transporter with a broad substrate spectrum. Finally, increases the tolerance to cycloheximide when expressed in S.cerevisiae, but not in dermatophyte species. This chain is MFS-type efflux pump MFS1, found in Trichophyton rubrum (strain ATCC MYA-4607 / CBS 118892) (Athlete's foot fungus).